The following is a 91-amino-acid chain: Large ribosomal subunit protein bL27 (91 aa).

Residues Met-1 to Tyr-20 form a disordered region.

It belongs to the bacterial ribosomal protein bL27 family.

This is Large ribosomal subunit protein bL27 from Deinococcus geothermalis (strain DSM 11300 / CIP 105573 / AG-3a).